A 646-amino-acid chain; its full sequence is Capsid scaffolding protein (646 aa).

Active-site charge relay system residues include histidine 55, serine 123, and histidine 142. The segment at 336 to 355 is interaction with pAP; it reads GDYILVPAAQYNQLVVGQHT. The tract at residues 421–483 is disordered; that stretch reads TKGSDPHVIQ…RPGERRAGRP (63 aa). Positions 445–451 match the Nuclear localization signal motif; the sequence is RYARKRR. Basic and acidic residues-rich tracts occupy residues 452–462 and 471–480; these read HDWDATTRDDL and RSPRPGERRA. An interaction with major capsid protein region spans residues 626-646; sequence TGLEFGRDDADIFVSQMMSAR.

This sequence belongs to the herpesviridae capsid scaffolding protein family. As to quaternary structure, homomultimer. Interacts with major capsid protein. Exists in a monomer-dimer equilibrium with the dimer being the active species. Capsid scaffolding protein is cleaved by assemblin after formation of the spherical procapsid. As a result, the capsid obtains its mature, icosahedral shape. Cleavages occur at two or more sites: release (R-site) and maturation (M-site).

Its subcellular location is the host cytoplasm. The protein localises to the host nucleus. The catalysed reaction is Cleaves -Ala-|-Ser- and -Ala-|-Ala- bonds in the scaffold protein.. Functionally, acts as a scaffold protein by binding major capsid protein in the cytoplasm, inducing the nuclear localization of both proteins. Multimerizes in the nucleus such as major capsid protein forms the icosahedral T=16 capsid. Autocatalytic cleavage releases the assembly protein, and subsequently abolishes interaction with major capsid protein. Cleavages products are evicted from the capsid before or during DNA packaging. Protease that plays an essential role in virion assembly within the nucleus. Catalyzes the cleavage of the assembly protein after formation of the spherical procapsid. By that cleavage, the capsid matures and gains its icosahedral shape. The cleavage sites seem to include -Ala-Ser-, -Ala-Ala-, as well as Ala-Thr bonds. Assemblin and cleavages products are evicted from the capsid before or during DNA packaging. Its function is as follows. Plays a major role in capsid assembly. Acts as a scaffold protein by binding major capsid protein. Multimerizes in the nucleus such as major capsid protein forms the icosahedral T=16 capsid. Cleaved by assemblin after capsid completion. The cleavages products are evicted from the capsid before or during DNA packaging. The chain is Capsid scaffolding protein (35) from Equus caballus (Horse).